An 872-amino-acid polypeptide reads, in one-letter code: Protein SCD5 (872 aa).

Disordered regions lie at residues Met1–Asp98 and Pro209–Gln239. The segment covering Phe48–Asn85 has biased composition (polar residues). Positions Lys272–Phe276 match the KKRVK motif; Required for interaction with GLC7, endocytosis and actin cytoskeleton organization motif. 2 disordered regions span residues Ile280–Thr321 and Ser338–Leu358. 2 stretches are compositionally biased toward polar residues: residues Asp284–Ser296 and Gly339–Gln348. Repeat copies occupy residues Gln405–Arg424, Gln439–Arg458, Ser479–Lys498, Ser534–Gln545, Ser564–Ile575, Pro593–Ser604, Ser608–Ser619, Ser623–Ile634, Ser636–Thr647, Ser650–Gln661, Pro683–Gln694, and Ser717–Ser728. Positions Gln405–Thr448 are 3 X 20 AA approximate repeats. Phosphothreonine; by PRK1 is present on residues Thr416 and Thr450. The tract at residues His460–Ala489 is disordered. A compositionally biased stretch (polar residues) spans Glu462–Gly481. Thr490 carries the post-translational modification Phosphothreonine; by PRK1. 2 disordered regions span residues Gln516–Asn571 and Ala591–Gln620. A 9 X 12 AA approximate repeats region spans residues Ser534–Ser728. Ser564 is modified (phosphoserine). Polar residues predominate over residues Pro594–Gln620. The interval Ile649–Ile681 is disordered. Residues Pro651–Gln663 show a composition bias toward low complexity. Residues Leu697–Gln727 are compositionally biased toward polar residues. 2 disordered regions span residues Leu697–Phe758 and Asn806–Phe838. A compositionally biased stretch (low complexity) spans Ser728–Thr745. 2 stretches are compositionally biased toward polar residues: residues Val746–Phe758 and Asn806–Lys815. Residues Gln823–Gln835 show a composition bias toward low complexity.

Interacts (via KKVRF motif) with phosphatase GLC7. Phosphorylation by PRK1 and/or AKL1 on Thr-416, Thr-450 and Thr-490 of repeats 1-1, 1-2 and/or 1-3 negatively regulates SCD5 function in endocytosis and actin cytoskeleton organization.

It localises to the membrane. In terms of biological role, regulates both fluid phase and receptor-mediated endocytosis. Involved in vesicular transport at a late stage of the secretory pathway. Regulates actin cytoskeleton organization. The protein is Protein SCD5 (SCD5) of Saccharomyces cerevisiae (strain ATCC 204508 / S288c) (Baker's yeast).